A 426-amino-acid polypeptide reads, in one-letter code: Trigger factor (426 aa).

Residues 165–239 (GDVYKLNEAG…ISEIKRLELP (75 aa)) form the PPIase FKBP-type domain.

This sequence belongs to the FKBP-type PPIase family. Tig subfamily.

The protein resides in the cytoplasm. It catalyses the reaction [protein]-peptidylproline (omega=180) = [protein]-peptidylproline (omega=0). Functionally, involved in protein export. Acts as a chaperone by maintaining the newly synthesized protein in an open conformation. Functions as a peptidyl-prolyl cis-trans isomerase. This chain is Trigger factor, found in Pelodictyon phaeoclathratiforme (strain DSM 5477 / BU-1).